A 412-amino-acid chain; its full sequence is FAD-dependent monooxygenase nscC (412 aa).

Positions 1–21 (MGKQQETILIIGAGISGLATS) are cleaved as a signal peptide. FAD is bound by residues glutamate 35 and alanine 46. Asparagine 92 is a glycosylation site (N-linked (GlcNAc...) asparagine). Arginine 119 lines the FAD pocket. N-linked (GlcNAc...) asparagine glycans are attached at residues asparagine 170 and asparagine 231. FAD is bound by residues aspartate 326 and glycine 339.

It belongs to the paxM FAD-dependent monooxygenase family. FAD serves as cofactor.

It participates in secondary metabolite biosynthesis. In terms of biological role, FAD-dependent monooxygenase; part of the gene cluster that mediates the biosynthesis of neosartoricin B, a prenylated anthracenone that probably exhibits T-cell antiproliferative activity, suggestive of a physiological role as an immunosuppressive agent. The non-reducing polyketide synthase nscA probably synthesizes and cyclizes the decaketide backbone. The hydrolase nscB then mediates the product release through hydrolysis followed by spontaneous decarboxylation. The prenyltransferase nscD catalyzes the addition of the dimethylallyl group to the aromatic C5. The FAD-dependent monooxygenase nscC is then responsible for the stereospecific hydroxylation at C2. Neosartoricin B can be converted into two additional compounds neosartoricins C and D. Neosartoricin C is a spirocyclic compound that is cyclized through the attack of C3 hydroxyl on C14, followed by dehydration. On the other hand, neosartoricin D is a further cyclized compound in which attack of C2 on C14 in neosartoricin C results in the formation of the acetal-containing dioxabicyclo-octanone ring. Both of these compounds are novel and possibly represent related metabolites of the gene cluster. The polypeptide is FAD-dependent monooxygenase nscC (Trichophyton tonsurans (strain CBS 112818) (Scalp ringworm fungus)).